We begin with the raw amino-acid sequence, 248 residues long: MRFTLVGNGRMGQQVALVIAQSGCHETAAVLDINTAITPDLFQGSDAIIDFTVREAFFANLPAMLESGVPIVVGTTGWDDLRDEIEVKVSDAGASLLYSANFSLGVNIFLRTVREAARLIAPFGQFDIAFAEQHHTAKADFPSGTALRAADMILSANSRKKSVVRQLSDDKKLAPDELQVASLRLGSVFGKHSAFIDSDADEIVISHTAKSRSGFAAGAVEAAIWLARRHTTAPGFYTMDDFLNETFS.

NAD(+) is bound by residues D32, 74–76 (GTT), and 99–102 (SANF). Catalysis depends on H134, which acts as the Proton donor/acceptor. A (S)-2,3,4,5-tetrahydrodipicolinate-binding site is contributed by H135. The active-site Proton donor is the K138. 144–145 (GT) is a binding site for (S)-2,3,4,5-tetrahydrodipicolinate.

This sequence belongs to the DapB family.

It localises to the cytoplasm. It carries out the reaction (S)-2,3,4,5-tetrahydrodipicolinate + NAD(+) + H2O = (2S,4S)-4-hydroxy-2,3,4,5-tetrahydrodipicolinate + NADH + H(+). The catalysed reaction is (S)-2,3,4,5-tetrahydrodipicolinate + NADP(+) + H2O = (2S,4S)-4-hydroxy-2,3,4,5-tetrahydrodipicolinate + NADPH + H(+). The protein operates within amino-acid biosynthesis; L-lysine biosynthesis via DAP pathway; (S)-tetrahydrodipicolinate from L-aspartate: step 4/4. In terms of biological role, catalyzes the conversion of 4-hydroxy-tetrahydrodipicolinate (HTPA) to tetrahydrodipicolinate. The polypeptide is 4-hydroxy-tetrahydrodipicolinate reductase (Pelodictyon phaeoclathratiforme (strain DSM 5477 / BU-1)).